Consider the following 996-residue polypeptide: NACHT, LRR and PYD domains-containing protein 9 (996 aa).

A Pyrin domain is found at 1–94; the sequence is MAESFFSDFG…WRKARNEIRQ (94 aa). The region spanning 150–469 is the NACHT domain; that stretch reads PTVVLHGPEG…FYMFTRPKDP (320 aa). Position 156–163 (156–163) interacts with ATP; that stretch reads GPEGIGKT. LRR repeat units lie at residues 748–769, 777–798, 805–825, 834–855, 862–883, and 891–914; these read KLNL…VLCE, ALEA…HLSQ, SLTF…TTLC, NLQE…DIAT, KLKT…QLCK, and KLEN…ASAL.

This sequence belongs to the NLRP family. As to quaternary structure, sensor component of NLRP9 inflammasomes. Inflammasomes are supramolecular complexes that assemble in the cytosol in response to pathogens, such as rotavirus, and play critical roles in innate immunity and inflammation. The core of NLRP9 inflammasomes consists of a signal sensor component (NLRP9), an adapter (ASC/PYCARD), which recruits an effector pro-inflammatory caspase (CASP1). Within the complex, NLRP9 and PYCARD interact via their respective DAPIN/pyrin domains. This interaction initiates speck formation (nucleation) which greatly enhances further addition of soluble PYCARD molecules to the speck in a prion-like polymerization process. Clustered PYCARD nucleates the formation of CASP1 filaments through the interaction of their respective CARD domains, acting as a platform for CASP1 polymerization. CASP1 filament formation increases local enzyme concentration, resulting in trans-autocleavage and activation. Active CASP1 then processes IL1B and IL18 precursors, leading to the release of mature cytokines in the extracellular milieu and inflammatory response. Interacts with DHX9 upon rotavirus infection; this interaction may trigger inflammasome activation and inflammatory response. Detected exclusively in testis and ovary, and at high level in the oocyte from antral follicles.

The protein resides in the cytoplasm. It is found in the inflammasome. As the sensor component of the NLRP9 inflammasome, plays a crucial role in innate immunity and inflammation. In response to pathogens, including rotavirus, initiates the formation of the inflammasome polymeric complex, made of NLRP9, PYCARD and CASP1. Recruitment of proCASP1 to the inflammasome promotes its activation and CASP1-catalyzed IL1B and IL18 maturation and release in the extracellular milieu. The active cytokines stimulate inflammatory responses. Inflammasomes can also induce pyroptosis, an inflammatory form of programmed cell death. NLRP9 inflammasome activation may be initiated by DHX9 interaction with viral double-stranded RNA (dsRNA), preferentially to short dsRNA segments. This Bos taurus (Bovine) protein is NACHT, LRR and PYD domains-containing protein 9 (NLRP9).